A 301-amino-acid polypeptide reads, in one-letter code: Phosphatidylserine decarboxylase proenzyme (301 aa).

Active-site charge relay system; for autoendoproteolytic cleavage activity residues include D117, H173, and S260. The active-site Schiff-base intermediate with substrate; via pyruvic acid; for decarboxylase activity is the S260. S260 bears the Pyruvic acid (Ser); by autocatalysis mark.

Belongs to the phosphatidylserine decarboxylase family. PSD-B subfamily. Prokaryotic type II sub-subfamily. As to quaternary structure, heterodimer of a large membrane-associated beta subunit and a small pyruvoyl-containing alpha subunit. Pyruvate is required as a cofactor. Is synthesized initially as an inactive proenzyme. Formation of the active enzyme involves a self-maturation process in which the active site pyruvoyl group is generated from an internal serine residue via an autocatalytic post-translational modification. Two non-identical subunits are generated from the proenzyme in this reaction, and the pyruvate is formed at the N-terminus of the alpha chain, which is derived from the carboxyl end of the proenzyme. The autoendoproteolytic cleavage occurs by a canonical serine protease mechanism, in which the side chain hydroxyl group of the serine supplies its oxygen atom to form the C-terminus of the beta chain, while the remainder of the serine residue undergoes an oxidative deamination to produce ammonia and the pyruvoyl prosthetic group on the alpha chain. During this reaction, the Ser that is part of the protease active site of the proenzyme becomes the pyruvoyl prosthetic group, which constitutes an essential element of the active site of the mature decarboxylase.

It localises to the cell membrane. The catalysed reaction is a 1,2-diacyl-sn-glycero-3-phospho-L-serine + H(+) = a 1,2-diacyl-sn-glycero-3-phosphoethanolamine + CO2. Its pathway is phospholipid metabolism; phosphatidylethanolamine biosynthesis; phosphatidylethanolamine from CDP-diacylglycerol: step 2/2. Functionally, catalyzes the formation of phosphatidylethanolamine (PtdEtn) from phosphatidylserine (PtdSer). The chain is Phosphatidylserine decarboxylase proenzyme from Chlamydia trachomatis serovar L2b (strain UCH-1/proctitis).